Here is a 79-residue protein sequence, read N- to C-terminus: MDVKETILNIIEELFMEDVSEMMDEDLFDAGVLDSMGTVELIVELESRFNITVPVSEFGREDWNTANKIISGVVELMHA.

The 77-residue stretch at Met-1–Met-77 folds into the Carrier domain. Ser-35 is modified (O-(pantetheine 4'-phosphoryl)serine).

Belongs to the DltC family. 4'-phosphopantetheine is transferred from CoA to a specific serine of apo-DCP.

It localises to the cytoplasm. It participates in cell wall biogenesis; lipoteichoic acid biosynthesis. Carrier protein involved in the D-alanylation of lipoteichoic acid (LTA). The loading of thioester-linked D-alanine onto DltC is catalyzed by D-alanine--D-alanyl carrier protein ligase DltA. The DltC-carried D-alanyl group is further transferred to cell membrane phosphatidylglycerol (PG) by forming an ester bond, probably catalyzed by DltD. D-alanylation of LTA plays an important role in modulating the properties of the cell wall in Gram-positive bacteria, influencing the net charge of the cell wall. The polypeptide is D-alanyl carrier protein (Streptococcus suis (strain 05ZYH33)).